The sequence spans 358 residues: DNA polymerase IV (358 aa).

In terms of domain architecture, UmuC spans 6 to 187 (IIHIDMDYFF…LDIGDFPGVG (182 aa)). Mg(2+) is bound by residues Asp10 and Asp105. The active site involves Glu106.

It belongs to the DNA polymerase type-Y family. As to quaternary structure, monomer. The cofactor is Mg(2+).

It is found in the cytoplasm. The catalysed reaction is DNA(n) + a 2'-deoxyribonucleoside 5'-triphosphate = DNA(n+1) + diphosphate. Functionally, poorly processive, error-prone DNA polymerase involved in untargeted mutagenesis. Copies undamaged DNA at stalled replication forks, which arise in vivo from mismatched or misaligned primer ends. These misaligned primers can be extended by PolIV. Exhibits no 3'-5' exonuclease (proofreading) activity. May be involved in translesional synthesis, in conjunction with the beta clamp from PolIII. This chain is DNA polymerase IV, found in Staphylococcus haemolyticus (strain JCSC1435).